Reading from the N-terminus, the 655-residue chain is MGIFSIANQHIRFAVKLATAIVLALFVGFHFQLETPRWAVLTAAIVAAGPAFAAGGEPYSGAIRYRGFLRIIGTFIGCIAGLVIIIAMIRAPLLMILVCCIWAGFCTWISSLVRIENSYAWGLAGYTALIIVITIQPEPLLTPQFAVERCSEIVIGIVCAIMADLLFSPRSIKQEVDRELESLLVAQYQLMQLCIKHGDGEVVDKAWGDLVRRTTALQGMRSNLNMESSRWARANRRLKAINTLSLTLITQSCETYLIQNTRPELITDTFREFFDTPVETAQDVHKQLKRLRRVIAWTGERETPVTIYSWVAAATRYQLLKRGVISNTKINATEEEILQGEPEVKVESAERHHAMVNFWRTTLSCILGTLFWLWTGWTSGSGAMVMIAVVTSLAMRLPNPRMVAIDFIYGTLAALPLGLLYFLVIIPNTQQSMLLLCISLAVLGFFLGIEVQKRRLGSMGALASTINIIVLDNPMTFHFSQFLDSALGQIVGCVLAFTVILLVRDKSRDRTGRVLLNQFVSAAVSAMTTNVARRKENHLPALYQQLFLLMNKFPGDLPKFRLALTMIIAHQRLRDAPIPVNEDLSAFHRQMRRTADHVISARSDDKRRRYFGQLLEELKIYQEKLRIWQAPPQVTEPVHRLTGMLHKYQHALTDS.

The next 11 helical transmembrane spans lie at 13-33 (FAVKLATAIVLALFVGFHFQL), 38-58 (WAVLTAAIVAAGPAFAAGGEP), 69-89 (LRIIGTFIGCIAGLVIIIAMI), 93-113 (LLMILVCCIWAGFCTWISSLV), 121-141 (WGLAGYTALIIVITIQPEPLL), 152-172 (EIVIGIVCAIMADLLFSPRSI), 370-390 (LFWLWTGWTSGSGAMVMIAVV), 407-427 (FIYGTLAALPLGLLYFLVIIP), 431-451 (QSMLLLCISLAVLGFFLGIEV), 459-479 (MGALASTINIIVLDNPMTFHF), and 482-502 (FLDSALGQIVGCVLAFTVILL).

Belongs to the aromatic acid exporter ArAE (TC 2.A.85) family.

It is found in the cell inner membrane. Its function is as follows. Forms an efflux pump with AaeA. Could function as a metabolic relief valve, allowing to eliminate certain compounds when they accumulate to high levels in the cell. The polypeptide is p-hydroxybenzoic acid efflux pump subunit AaeB (Escherichia coli O6:K15:H31 (strain 536 / UPEC)).